The following is a 501-amino-acid chain: Zinc finger protein 704 (501 aa).

The span at 80 to 96 (SLKSTCNGGQRDGLTQG) shows a compositional bias: polar residues. Disordered regions lie at residues 80–138 (SLKS…HTRS), 183–203 (PLVR…WKDG), and 216–267 (WSWS…LFDE). Residues 115–137 (EEPRVLEHKRTGRALETEKDHTR) are compositionally biased toward basic and acidic residues. A C2H2-type zinc finger spans residues 281–306 (FKCLWKNCGKVLSTAAGIQRHIRTVH). Disordered regions lie at residues 340-380 (SLSP…SRSA), 398-419 (PVTI…FSIS), 427-446 (FTGT…GEQH), and 453-472 (LSSP…GEGK). Residues 368–380 (SESSSSTPLSRSA) show a composition bias toward low complexity. The CR1 signature appears at 472 to 476 (KKCRK). The CR2 signature appears at 490–494 (CRWKK).

The protein resides in the nucleus. Functionally, transcription factor. The polypeptide is Zinc finger protein 704 (znf704) (Danio rerio (Zebrafish)).